Consider the following 396-residue polypeptide: Lipid-A-disaccharide synthase (396 aa).

This sequence belongs to the LpxB family.

The enzyme catalyses a lipid X + a UDP-2-N,3-O-bis[(3R)-3-hydroxyacyl]-alpha-D-glucosamine = a lipid A disaccharide + UDP + H(+). The protein operates within bacterial outer membrane biogenesis; LPS lipid A biosynthesis. Condensation of UDP-2,3-diacylglucosamine and 2,3-diacylglucosamine-1-phosphate to form lipid A disaccharide, a precursor of lipid A, a phosphorylated glycolipid that anchors the lipopolysaccharide to the outer membrane of the cell. The polypeptide is Lipid-A-disaccharide synthase (Rhodopseudomonas palustris (strain BisB18)).